The following is a 351-amino-acid chain: MSEHDRELVSPEAALDDHAVESALRPRTLDEFVGQDRVREQLSLVLRSAQQRGTAPDHILMSGGPGLGKTTLAMIIAAELGAPLRITSGPAIERSGDLAAVLSTLREGEVLFLDEIHRMARPAEEMLYVAMEDFRVDVMVGKGPGATAIPLEIAPFTLVGATTRAGMLPAPLRDRFGFVAHMDFYSPEELELILHRSARLLGIELLDDAAAEIARRSRGTPRIANRLLRRVRDYAQVRGDGRLTLECARAALSLYEVDDEGLDRLDRAVLDALLRRFRGGPVGLSTLAVSVGEEPETVEIVAEPFLVRAGFIARTPRGRVATPQAWAHMGLTPPPDAAFGAAALFDPDEEP.

A large ATPase domain (RuvB-L) region spans residues 4–185; that stretch reads HDRELVSPEA…FGFVAHMDFY (182 aa). ATP contacts are provided by residues Leu24, Arg25, Gly66, Lys69, Thr70, Thr71, 132–134, Arg175, Tyr185, and Arg222; that span reads EDF. A Mg(2+)-binding site is contributed by Thr70. The interval 186-256 is small ATPAse domain (RuvB-S); it reads SPEELELILH…CARAALSLYE (71 aa). Positions 259–351 are head domain (RuvB-H); it reads DEGLDRLDRA…AALFDPDEEP (93 aa). Residues Arg314 and Arg319 each coordinate DNA.

The protein belongs to the RuvB family. Homohexamer. Forms an RuvA(8)-RuvB(12)-Holliday junction (HJ) complex. HJ DNA is sandwiched between 2 RuvA tetramers; dsDNA enters through RuvA and exits via RuvB. An RuvB hexamer assembles on each DNA strand where it exits the tetramer. Each RuvB hexamer is contacted by two RuvA subunits (via domain III) on 2 adjacent RuvB subunits; this complex drives branch migration. In the full resolvosome a probable DNA-RuvA(4)-RuvB(12)-RuvC(2) complex forms which resolves the HJ.

Its subcellular location is the cytoplasm. It carries out the reaction ATP + H2O = ADP + phosphate + H(+). In terms of biological role, the RuvA-RuvB-RuvC complex processes Holliday junction (HJ) DNA during genetic recombination and DNA repair, while the RuvA-RuvB complex plays an important role in the rescue of blocked DNA replication forks via replication fork reversal (RFR). RuvA specifically binds to HJ cruciform DNA, conferring on it an open structure. The RuvB hexamer acts as an ATP-dependent pump, pulling dsDNA into and through the RuvAB complex. RuvB forms 2 homohexamers on either side of HJ DNA bound by 1 or 2 RuvA tetramers; 4 subunits per hexamer contact DNA at a time. Coordinated motions by a converter formed by DNA-disengaged RuvB subunits stimulates ATP hydrolysis and nucleotide exchange. Immobilization of the converter enables RuvB to convert the ATP-contained energy into a lever motion, pulling 2 nucleotides of DNA out of the RuvA tetramer per ATP hydrolyzed, thus driving DNA branch migration. The RuvB motors rotate together with the DNA substrate, which together with the progressing nucleotide cycle form the mechanistic basis for DNA recombination by continuous HJ branch migration. Branch migration allows RuvC to scan DNA until it finds its consensus sequence, where it cleaves and resolves cruciform DNA. This Thermobifida fusca (strain YX) protein is Holliday junction branch migration complex subunit RuvB.